The following is a 311-amino-acid chain: Methionyl-tRNA formyltransferase (311 aa).

(6S)-5,6,7,8-tetrahydrofolate is bound at residue 111–114 (SLLP).

This sequence belongs to the Fmt family.

It carries out the reaction L-methionyl-tRNA(fMet) + (6R)-10-formyltetrahydrofolate = N-formyl-L-methionyl-tRNA(fMet) + (6S)-5,6,7,8-tetrahydrofolate + H(+). In terms of biological role, attaches a formyl group to the free amino group of methionyl-tRNA(fMet). The formyl group appears to play a dual role in the initiator identity of N-formylmethionyl-tRNA by promoting its recognition by IF2 and preventing the misappropriation of this tRNA by the elongation apparatus. This chain is Methionyl-tRNA formyltransferase, found in Caldicellulosiruptor saccharolyticus (strain ATCC 43494 / DSM 8903 / Tp8T 6331).